A 710-amino-acid polypeptide reads, in one-letter code: TRP-like ion channel pkd2 (710 aa).

Residues 1-23 (MRLWRSPLLLLVVVVELFSWADA) form the signal peptide. 9 helical membrane-spanning segments follow: residues 173–193 (WVMC…SPVL), 197–217 (ALWE…IQAL), 322–342 (FFAT…LVAM), 376–396 (FFYR…MWEI), 404–424 (LAFL…YAFV), 466–486 (FFYF…FIGF), 492–512 (KVQG…MVIL), 525–545 (IGVA…CQAF), and 555–575 (IGII…LGIF). 2 positions are modified to phosphoserine: Ser-599 and Ser-632. Positions 689 to 710 (RISENNNNAERRRKPLPNNAFR) are disordered.

The protein belongs to the transient receptor potential (TRP) ion channel family. In terms of assembly, interacts with rho1.

The protein resides in the cell membrane. The protein localises to the golgi apparatus membrane. Its function is as follows. Acts as a key signaling component in the regulation of cell shape and cell wall synthesis through interaction with GTPase Rho1. This Schizosaccharomyces pombe (strain 972 / ATCC 24843) (Fission yeast) protein is TRP-like ion channel pkd2 (pkd2).